A 101-amino-acid chain; its full sequence is Small ribosomal subunit protein uS14 (101 aa).

Belongs to the universal ribosomal protein uS14 family. As to quaternary structure, part of the 30S ribosomal subunit. Contacts proteins S3 and S10.

Its function is as follows. Binds 16S rRNA, required for the assembly of 30S particles and may also be responsible for determining the conformation of the 16S rRNA at the A site. This chain is Small ribosomal subunit protein uS14, found in Alteromonas mediterranea (strain DSM 17117 / CIP 110805 / LMG 28347 / Deep ecotype).